Here is a 627-residue protein sequence, read N- to C-terminus: Protein fem-1 homolog B (627 aa).

ANK repeat units follow at residues 45–74 (QRST…VQTQ), 87–116 (DGAT…NVNH), 120–149 (TNST…NISI), 153–182 (YDNT…DPNA), 186–215 (CGAT…AMMV), and 218–248 (HGMT…NRRS). One copy of the TPR repeat lies at 344–377 (SHPIIYRGAVYADNMEFEQCIKLWLHALHLRQKG). ANK repeat units lie at residues 483–527 (DGST…DVNA) and 531–568 (EGNS…HTDM).

It belongs to the fem-1 family. In terms of assembly, component of a CRL2 E3 ubiquitin-protein ligase complex, also named ECS (Elongin BC-CUL2/5-SOCS-box protein) complex.

It is found in the cytoplasm. The protein localises to the nucleus. It participates in protein modification; protein ubiquitination. Its function is as follows. Substrate-recognition component of a Cul2-RING (CRL2) E3 ubiquitin-protein ligase complex of the DesCEND (destruction via C-end degrons) pathway, which recognizes a C-degron located at the extreme C terminus of target proteins, leading to their ubiquitination and degradation. The C-degron recognized by the DesCEND pathway is usually a motif of less than ten residues and can be present in full-length proteins, truncated proteins or proteolytically cleaved forms. The CRL2(FEM1B) complex specifically recognizes proteins ending with -Gly-Leu-Asp-Arg, leading to their ubiquitination and degradation. This chain is Protein fem-1 homolog B, found in Gallus gallus (Chicken).